Reading from the N-terminus, the 331-residue chain is Zinc finger CW-type PWWP domain protein 2 homolog (331 aa).

The CW-type zinc finger occupies 9 to 64; that stretch reads EFVHRTWVQCENESCLKWRLLSPAAAAAVNPSEPWYCFMNTDPSYSSCSVSEEDFP. Zn(2+)-binding residues include Cys-18, Cys-23, Cys-45, and Cys-56. A PWWP domain is found at 83 to 147; sequence LGSLVLVKLR…AAFVGHFSLT (65 aa). The tract at residues 264 to 295 is disordered; that stretch reads IQEPTAREDESQGEQLSQCSPESPTGSPFQSY. A compositionally biased stretch (polar residues) spans 276–293; the sequence is GEQLSQCSPESPTGSPFQ.

Functionally, histone methylation reader which binds to non-methylated (H3K4me0), monomethylated (H3K4me1), dimethylated (H3K4me2) and trimethylated (H3K4me3) 'Lys-4' on histone H3. The order of binding preference is H3K4me3 &gt; H3K4me2 &gt; H3K4me1 &gt; H3K4me0. The polypeptide is Zinc finger CW-type PWWP domain protein 2 homolog (Zcwpw2) (Mus musculus (Mouse)).